The primary structure comprises 370 residues: Psilocybin cluster transcription regulator (370 aa).

2 disordered regions span residues 1–39 and 102–221; these read MAPTTPATHDPALSHGAPPTQGSQAPANAAPNLTPADIS and YQTG…RRRR. Polar residues predominate over residues 143–152; sequence IQHQDQQQSG. Residues 183 to 202 show a composition bias toward low complexity; sequence TSTSTPSGGRRGGRSATMGS. Basic and acidic residues predominate over residues 204–218; the sequence is EWSRQRKDNHKEVER. Residues 208–221 are basic motif; that stretch reads QRKDNHKEVERRRR. In terms of domain architecture, bHLH spans 208-258; sequence QRKDNHKEVERRRRGNINEGINELGRIVPSGSGEKAKGAILSRAVQYIHHL. Residues 222 to 258 are helix-loop-helix motif; that stretch reads GNINEGINELGRIVPSGSGEKAKGAILSRAVQYIHHL. Positions 317-370 are disordered; that stretch reads VSTAGAGSGAAKDESAAGTKRRSTDGADAAGTNVEGGNNDNAEGERDGKRQRTE. Basic and acidic residues predominate over residues 359-370; it reads EGERDGKRQRTE.

Its subcellular location is the nucleus. Transcription factor that may regulate the expression of the gene cluster that mediates the biosynthesis of psilocybin, a psychotropic tryptamine-derived natural product. The chain is Psilocybin cluster transcription regulator from Psilocybe cyanescens.